Reading from the N-terminus, the 492-residue chain is Ribose import ATP-binding protein RbsA (492 aa).

ABC transporter domains are found at residues 3–239 (IDMR…VGRK) and 238–492 (RKLE…TGGK). Residue 35-42 (GENGAGKS) participates in ATP binding.

The protein belongs to the ABC transporter superfamily. Ribose importer (TC 3.A.1.2.1) family. The complex is composed of an ATP-binding protein (RbsA), two transmembrane proteins (RbsC) and a solute-binding protein (RbsB).

Its subcellular location is the cell membrane. It catalyses the reaction D-ribose(out) + ATP + H2O = D-ribose(in) + ADP + phosphate + H(+). In terms of biological role, part of the ABC transporter complex RbsABC involved in ribose import. Responsible for energy coupling to the transport system. The chain is Ribose import ATP-binding protein RbsA from Streptococcus agalactiae serotype V (strain ATCC BAA-611 / 2603 V/R).